Here is a 246-residue protein sequence, read N- to C-terminus: Probable phosphatase Ssed_2939 (246 aa).

Residues His8, His10, His16, His41, Glu74, His102, His132, Asp193, and His195 each coordinate Zn(2+).

This sequence belongs to the PHP family. Requires Zn(2+) as cofactor.

This chain is Probable phosphatase Ssed_2939, found in Shewanella sediminis (strain HAW-EB3).